Reading from the N-terminus, the 180-residue chain is Adenine phosphoribosyltransferase (180 aa).

The protein belongs to the purine/pyrimidine phosphoribosyltransferase family. Homodimer.

The protein resides in the cytoplasm. It catalyses the reaction AMP + diphosphate = 5-phospho-alpha-D-ribose 1-diphosphate + adenine. It participates in purine metabolism; AMP biosynthesis via salvage pathway; AMP from adenine: step 1/1. Catalyzes a salvage reaction resulting in the formation of AMP, that is energically less costly than de novo synthesis. This Mycolicibacterium smegmatis (strain ATCC 700084 / mc(2)155) (Mycobacterium smegmatis) protein is Adenine phosphoribosyltransferase.